The following is a 498-amino-acid chain: DEAD-box ATP-dependent RNA helicase 6 (498 aa).

The tract at residues 1 to 109 (MDPRARYPPG…WKAQLKLPPQ (109 aa)) is disordered. The span at 33 to 49 (QHQHQHQQPPHPHHHQY) shows a compositional bias: basic residues. 2 stretches are compositionally biased toward low complexity: residues 50–61 (VQRQPQPQQTPH) and 75–86 (AAEAAGASEQKA). The Q motif signature appears at 124-152 (NEFEDYFLKRELLMGIYEKGFERPSPIQE). One can recognise a Helicase ATP-binding domain in the interval 155–325 (IPIALTGSDI…DKYLPKPYVI (171 aa)). 168–175 (AKNGTGKT) contributes to the ATP binding site. Residues 273–276 (DEAD) carry the DEAD box motif. The Helicase C-terminal domain maps to 335 to 495 (GITQFYAFVE…PIPPQIDRAI (161 aa)).

It belongs to the DEAD box helicase family. DDX6/DHH1 subfamily.

It localises to the cytoplasm. Its subcellular location is the P-body. It catalyses the reaction ATP + H2O = ADP + phosphate + H(+). Its function is as follows. ATP-dependent RNA helicase involved in mRNA turnover, and more specifically in mRNA decapping. In Oryza sativa subsp. japonica (Rice), this protein is DEAD-box ATP-dependent RNA helicase 6.